Here is a 198-residue protein sequence, read N- to C-terminus: Bcl-2-like protein 11 (198 aa).

The interval 1 to 72 is disordered; sequence MAKQPSDVSS…PLAPPASPGP (72 aa). Residue Ser69 is modified to Phosphoserine; by MAPK. Phosphoserine is present on residues Ser77, Ser87, and Ser94. A BH3 motif is present at residues 148 to 162; it reads IAQELRRIGDEFNAY.

The protein belongs to the Bcl-2 family. As to quaternary structure, forms heterodimers with a number of antiapoptotic Bcl-2 proteins, including MCL1, BCL2, BCL2L1 isoform Bcl-X(L), BCL2A1/BFL-1, BHRF1, and BCL2L2/BCLW. Does not heterodimerize with proapoptotic proteins such as BAD, BOK or BAK. Identified in a complex containing BCL2L11, DYNLL1 and BCL2L1 isoform Bcl-X(L); BH3 integrity is required for BCL2L1-binding. Interacts with YWHAZ. When phosphorylated, interacts with TRIM2; this interaction is associated with ubiquitination and degradation. Interacts with MCL1; may sequester BCL2L11 to prevent its pro-apoptotic activity. Interacts with GIMAP5. Interacts with BCL2L10/BCL-B. In terms of assembly, interacts (when phosphorylated) with USP27X; the interaction leads to BCL2L11 deubiquitination and stabilization. Interacts with humanin; the interaction prevents BIM-induced apoptosis. Does not interact with humanin. As to quaternary structure, interacts with BAX; the interaction may lead to BAX activation through conformational change. Does not interact with humanin. In terms of assembly, interacts with BAX; the interaction may lead to BAX activation through conformational change. Post-translationally, phosphorylation at Ser-69 by MAPK1/MAPK3 leads to interaction with TRIM2 and polyubiquitination, followed by proteasomal degradation. Deubiquitination catalyzed by USP27X stabilizes the protein. In terms of processing, ubiquitination by TRIM2 following phosphorylation by MAPK1/MAPK3 leads to proteasomal degradation. Conversely, deubiquitination catalyzed by USP27X stabilizes the protein. In terms of tissue distribution, isoform BimEL, isoform BimL and isoform BimS are the predominant isoforms and are widely expressed with tissue-specific variation. Isoform Bim-gamma is most abundantly expressed in small intestine and colon, and in lower levels in spleen, prostate, testis, heart, liver and kidney.

Its subcellular location is the endomembrane system. It is found in the mitochondrion. Its function is as follows. Induces apoptosis and anoikis. Isoform BimL is more potent than isoform BimEL. Isoform Bim-alpha1, isoform Bim-alpha2 and isoform Bim-alpha3 induce apoptosis, although less potent than isoform BimEL, isoform BimL and isoform BimS. Isoform Bim-gamma induces apoptosis. Isoform Bim-alpha3 induces apoptosis possibly through a caspase-mediated pathway. Isoform BimAC and isoform BimABC lack the ability to induce apoptosis. The protein is Bcl-2-like protein 11 (BCL2L11) of Homo sapiens (Human).